Consider the following 298-residue polypeptide: Probable alpha-L-glutamate ligase (298 aa).

The region spanning 104 to 287 (MQLLSRHGIG…VAGKIIEFLE (184 aa)) is the ATP-grasp domain. Residues Lys141, 178–179 (EY), Asp187, and 211–213 (RSN) each bind ATP. Mg(2+) is bound by residues Asp248, Glu260, and Asn262. Residues Asp248, Glu260, and Asn262 each coordinate Mn(2+).

This sequence belongs to the RimK family. Mg(2+) serves as cofactor. Requires Mn(2+) as cofactor.

The protein is Probable alpha-L-glutamate ligase of Aeromonas salmonicida (strain A449).